The primary structure comprises 377 residues: Glutamate 5-kinase (377 aa).

Lys20 contributes to the ATP binding site. Substrate-binding residues include Ser60, Asp147, and Asn159. 179–180 (TD) contacts ATP. One can recognise a PUA domain in the interval 285–363 (AGRLVIDDGA…DKVYQVLGEA (79 aa)).

This sequence belongs to the glutamate 5-kinase family.

It localises to the cytoplasm. It catalyses the reaction L-glutamate + ATP = L-glutamyl 5-phosphate + ADP. The protein operates within amino-acid biosynthesis; L-proline biosynthesis; L-glutamate 5-semialdehyde from L-glutamate: step 1/2. In terms of biological role, catalyzes the transfer of a phosphate group to glutamate to form L-glutamate 5-phosphate. The sequence is that of Glutamate 5-kinase from Acinetobacter baumannii (strain AB307-0294).